The following is an 828-amino-acid chain: Periplasmic nitrate reductase (828 aa).

Residues Met-1–Ala-31 constitute a signal peptide (tat-type signal). Residues Ile-39–Asp-95 enclose the 4Fe-4S Mo/W bis-MGD-type domain. The [4Fe-4S] cluster site is built by Cys-46, Cys-49, Cys-53, and Cys-81. Mo-bis(molybdopterin guanine dinucleotide) is bound by residues Lys-83, Gln-150, Asn-175, Cys-179, Trp-212–Met-219, Ser-243–His-247, Gln-262–Asp-264, Met-372, Gln-376, Asn-482, Ser-508–Asp-509, Lys-531, Asp-558, and Thr-718–Thr-727. Residue Phe-794 coordinates substrate. Residues Asn-802 and Lys-819 each contribute to the Mo-bis(molybdopterin guanine dinucleotide) site.

It belongs to the prokaryotic molybdopterin-containing oxidoreductase family. NasA/NapA/NarB subfamily. As to quaternary structure, component of the periplasmic nitrate reductase NapAB complex composed of NapA and NapB. The cofactor is [4Fe-4S] cluster. It depends on Mo-bis(molybdopterin guanine dinucleotide) as a cofactor. Predicted to be exported by the Tat system. The position of the signal peptide cleavage has not been experimentally proven.

It localises to the periplasm. It carries out the reaction 2 Fe(II)-[cytochrome] + nitrate + 2 H(+) = 2 Fe(III)-[cytochrome] + nitrite + H2O. Catalytic subunit of the periplasmic nitrate reductase complex NapAB. Receives electrons from NapB and catalyzes the reduction of nitrate to nitrite. In Escherichia coli O6:K15:H31 (strain 536 / UPEC), this protein is Periplasmic nitrate reductase.